Here is a 240-residue protein sequence, read N- to C-terminus: CD302 antigen (240 aa).

Residues Phe-40 to Leu-160 enclose the C-type lectin domain. An N-linked (GlcNAc...) asparagine glycan is attached at Asn-117. An intrachain disulfide couples Cys-136 to Cys-151. Residues Ile-177–Ile-197 form a helical membrane-spanning segment. Topologically, residues Trp-198–Asp-240 are cytoplasmic.

It is found in the membrane. Its subcellular location is the cell projection. The protein localises to the filopodium. It localises to the cytoplasm. The protein resides in the cell cortex. Its function is as follows. Potential multifunctional C-type lectin receptor that may play roles in endocytosis and phagocytosis as well as in cell adhesion and migration. This chain is CD302 antigen, found in Sus scrofa (Pig).